We begin with the raw amino-acid sequence, 474 residues long: Putative response regulator NtrX-like (474 aa).

The Response regulatory domain occupies 5 to 121; that stretch reads DVLIVDDEES…KLVILLTRAC (117 aa). Residue Asp54 is modified to 4-aspartylphosphate. The Sigma-54 factor interaction domain maps to 143–368; that stretch reads LVGECSVTLK…LRNVVEWTLI (226 aa). Residues 171–178 and 231–240 contribute to the ATP site; these read GKVGSGKE and ANNGTLYIDE.

Functionally, member of the two-component regulatory system RC0849/RC0948. In Rickettsia conorii (strain ATCC VR-613 / Malish 7), this protein is Putative response regulator NtrX-like.